An 820-amino-acid polypeptide reads, in one-letter code: MNESYQPTLIEQLAQEYWEENETFEVKEDLSREKFYCLSMLPYPSGDLHMGHVRNYTIGDVIARYQIHKGRNVLQPMGWDAFGLPAENAAIQRELPPAEWTRKNIKKMRKQLKQLGFAYDWSREITTCDSTYYRWEQWLFLQLYKKGLAYKKNAIVNWDPVDQTVLANEQIVDGRGWRSGAVVERREISQWFLKITDYSEELLKDLDELKEWPEQVITMQRNWIGQSQGVIINFNLEKGPDKLQVYTTRPDTLMGVTYLAIAPEHPLAKERAKKSKKIAAFLKKCKQTRVAEADIATQEKEGIDSGLFAVHPLSKEKLPIWIANFVLMEYASGVVMAVPAHDERDHEFALKYDLPLKPVIEPADGHDWDYNQAAYTNPGKLINSGSFNDIDSKTAFNVIADYLKNNGAGSRQTHYRLRDWGISRQRYWGTPIPIIYCKTCGTVPVPENQLPVLLPEDIIPTGHGSPLKETASFYKTRCPVCNKPATRETDTMDTFVESSWYYARYSCPDQDKVMLDDRAKYWTPVDQYIGGIEHAVMHLLYARFMHKILRDLGLLNSNEPFIRLLTQGMVLKDGAKMSKSKGNVVTPQSLIKKYGADTVRLFIIFAAPPEQDLEWSDSGVEGAYRFLKKLWGFSYRIKDALLAINQQKERSNYQWEAPEHRQTRQQIHECLQQANIDMERLQFNTVVSAVMKILNILIKLTTDNDAEAHLIREGTGILLRLLSPITPHISHHLWQSLGFGGDILDAPWPRPDPKALQTTELELIVQINGKLRGRIQVPTEASKEIIESTALNQENVQRHLADKKIKKVIVVPKKLINILV.

A 'HIGH' region motif is present at residues 42-52 (PYPSGDLHMGH). The 'KMSKS' region signature appears at 576 to 580 (KMSKS). Lys579 contributes to the ATP binding site.

Belongs to the class-I aminoacyl-tRNA synthetase family.

The protein resides in the cytoplasm. The catalysed reaction is tRNA(Leu) + L-leucine + ATP = L-leucyl-tRNA(Leu) + AMP + diphosphate. This chain is Leucine--tRNA ligase, found in Coxiella burnetii (strain CbuK_Q154) (Coxiella burnetii (strain Q154)).